We begin with the raw amino-acid sequence, 406 residues long: Vacuole membrane protein 1 (406 aa).

Residues 1–20 (MAENGKNCDQRRIAMSKDQH) are compositionally biased toward basic and acidic residues. The disordered stretch occupies residues 1-37 (MAENGKNCDQRRIAMSKDQHNGSLTDPSSVHEKKRRD). A2 carries the post-translational modification N-acetylalanine. At 2-77 (AENGKNCDQR…WTSKLWHRQS (76 aa)) the chain is on the cytoplasmic side. Residues 78–98 (IVVSFLLLLAALVATYYVEGA) form a helical membrane-spanning segment. Residues 99–109 (HQQYVQRIEKQ) are Extracellular-facing. The helical transmembrane segment at 110 to 130 (FLLYAYWIGLGILSSVGLGTG) threads the bilayer. Topologically, residues 131–250 (LHTFLLYLGP…ASRAKLAVQK (120 aa)) are cytoplasmic. The segment at 173-316 (GAEGAISLWS…FVIVTFSKHI (144 aa)) is VTT domain. The helical transmembrane segment at 251-271 (LVQKVGFFGILACASIPNPLF) threads the bilayer. At 272–273 (DL) the chain is on the extracellular side. Residues 274–294 (AGITCGHFLVPFWTFFGATLI) traverse the membrane as a helical segment. Residues 295–305 (GKAIIKMHIQK) lie on the Cytoplasmic side of the membrane. A helical transmembrane segment spans residues 306-326 (IFVIVTFSKHIVEQMVTFIGA). Residues 327–363 (VPGIGPSLQKPFQEYLEAQRQKLHHRSEAGTPQGENW) are Extracellular-facing. The chain crosses the membrane as a helical span at residues 364–384 (LSWMFEKLVVAMVCYFVLSII). The Cytoplasmic portion of the chain corresponds to 385–406 (NSMAQNYAKRIQQRLNSEEKTK).

This sequence belongs to the VMP1 family. Interacts with BECN1. Interacts with TJP1. Interacts with TP53INP2. Interacts with TMEM41B. Interacts with ATP2A2, PLN and SLN; competes with PLN and SLN to prevent them from forming an inhibitory complex with ATP2A2. Interacts with ATG2A.

It is found in the endoplasmic reticulum-Golgi intermediate compartment membrane. The protein localises to the cell membrane. Its subcellular location is the vacuole membrane. It localises to the endoplasmic reticulum membrane. It catalyses the reaction a 1,2-diacyl-sn-glycero-3-phospho-L-serine(in) = a 1,2-diacyl-sn-glycero-3-phospho-L-serine(out). It carries out the reaction cholesterol(in) = cholesterol(out). The catalysed reaction is a 1,2-diacyl-sn-glycero-3-phosphocholine(in) = a 1,2-diacyl-sn-glycero-3-phosphocholine(out). The enzyme catalyses a 1,2-diacyl-sn-glycero-3-phosphoethanolamine(in) = a 1,2-diacyl-sn-glycero-3-phosphoethanolamine(out). Its function is as follows. Phospholipid scramblase involved in lipid homeostasis and membrane dynamics processes. Has phospholipid scramblase activity toward cholesterol and phosphatidylserine, as well as phosphatidylethanolamine and phosphatidylcholine. Required for autophagosome formation: participates in early stages of autophagosome biogenesis at the endoplasmic reticulum (ER) membrane by reequilibrating the leaflets of the ER as lipids are extracted by ATG2 (ATG2A or ATG2B) to mediate autophagosome assembly. Regulates ATP2A2 activity to control ER-isolation membrane contacts for autophagosome formation. In addition to autophagy, involved in other processes in which phospholipid scramblase activity is required. Modulates ER contacts with lipid droplets, mitochondria and endosomes. Plays an essential role in formation of cell junctions. Upon stress such as bacterial and viral infection, promotes formation of cytoplasmic vacuoles followed by cell death. Involved in the cytoplasmic vacuolization of acinar cells during the early stage of acute pancreatitis. The protein is Vacuole membrane protein 1 of Mus musculus (Mouse).